The following is a 55-amino-acid chain: Neurotoxin BmP08 (55 aa).

The N-terminal stretch at 1–23 is a signal peptide; the sequence is MKIFFAVLVILVLFSMLIWTAYG. Intrachain disulfides connect Cys30–Cys45, Cys36–Cys50, and Cys39–Cys53.

As to expression, expressed by the venom gland.

It is found in the secreted. The protein is Neurotoxin BmP08 of Olivierus martensii (Manchurian scorpion).